The primary structure comprises 310 residues: Protein translocase subunit SecF (310 aa).

6 consecutive transmembrane segments (helical) span residues Phe-20–Tyr-42, Ile-140–Val-160, Trp-164–Phe-184, Leu-194–Ile-214, Ile-246–Ala-266, and Val-272–Ile-292.

The protein belongs to the SecD/SecF family. SecF subfamily. As to quaternary structure, forms a complex with SecD. Part of the essential Sec protein translocation apparatus which comprises SecA, SecYEG and auxiliary proteins SecDF-YajC and YidC.

It is found in the cell inner membrane. Part of the Sec protein translocase complex. Interacts with the SecYEG preprotein conducting channel. SecDF uses the proton motive force (PMF) to complete protein translocation after the ATP-dependent function of SecA. The protein is Protein translocase subunit SecF of Rickettsia canadensis (strain McKiel).